The following is a 110-amino-acid chain: MVSQETIKHVKDLIAENEIFVASKTYCPYCHAALNTLFEKLKVPRSKVLVLQLNDMKEGADIQAALYEINGQRTVPNIYINGKHIGGNDDLQELRETGELEELLEPILAN.

Positions 7-110 constitute a Glutaredoxin domain; that stretch reads IKHVKDLIAE…EELLEPILAN (104 aa). Residue Lys11 forms a Glycyl lysine isopeptide (Lys-Gly) (interchain with G-Cter in ubiquitin) linkage. Glutathione-binding positions include 24–29, Gln63, Val75, and 88–89; these read KTYCPY and ND. Cys27 is modified (S-glutathionyl cysteine; alternate). A disulfide bridge links Cys27 with Cys30.

It belongs to the glutaredoxin family.

The protein localises to the cytoplasm. Its subcellular location is the nucleus. It carries out the reaction 2 glutathione + H2O2 = glutathione disulfide + 2 H2O. The catalysed reaction is 1-chloro-2,4-dinitrobenzene + glutathione = 2,4-dinitrophenyl-S-glutathione + chloride + H(+). It catalyses the reaction RX + glutathione = an S-substituted glutathione + a halide anion + H(+). Functionally, component of the glutathione system which performs several activities such as glutathione-dependent oxidoreductase, glutathione peroxidase and glutathione S-transferase (GST) activity. The disulfide bond functions as an electron carrier in the glutathione-dependent synthesis of deoxyribonucleotides by the enzyme ribonucleotide reductase. In addition, it is also involved in reducing cytosolic protein- and non-protein-disulfides in a coupled system with glutathione reductase. Required for resistance to reactive oxygen species (ROS) by directly reducing hydroperoxides and for the detoxification of ROS-mediated damage. GRX1 is less active as an oxidoreductase than GRX2. In Saccharomyces cerevisiae (strain ATCC 204508 / S288c) (Baker's yeast), this protein is Glutaredoxin-1 (GRX1).